The following is a 203-amino-acid chain: dCTP deaminase (203 aa).

Residues 105–110, Asp123, 131–133, Gln152, Tyr166, Lys173, and Gln177 each bind dCTP; these read RSSLGR and TLE. Glu133 acts as the Proton donor/acceptor in catalysis. Residues 164-203 are disordered; the sequence is RPYGVERGSKYQDQDGPQASRIGSDPEFHSDENQAAEHES. A compositionally biased stretch (basic and acidic residues) spans 166–176; that stretch reads YGVERGSKYQD. Basic and acidic residues predominate over residues 187-203; the sequence is SDPEFHSDENQAAEHES.

The protein belongs to the dCTP deaminase family. As to quaternary structure, homotrimer.

It catalyses the reaction dCTP + H2O + H(+) = dUTP + NH4(+). Its pathway is pyrimidine metabolism; dUMP biosynthesis; dUMP from dCTP (dUTP route): step 1/2. Its function is as follows. Catalyzes the deamination of dCTP to dUTP. This is dCTP deaminase from Halorubrum lacusprofundi (strain ATCC 49239 / DSM 5036 / JCM 8891 / ACAM 34).